The following is a 243-amino-acid chain: Cytochrome c1, heme protein (243 aa).

Topologically, residues 1 to 201 (GVDSHPPALP…CSNPWWDERK (201 aa)) are mitochondrial intermembrane. The 190-residue stretch at 5 to 194 (HPPALPWPHF…VTCFLEWCSN (190 aa)) folds into the Cytochrome c domain. 3 residues coordinate heme: C39, H40, and M159. A helical membrane pass occupies residues 202–221 (LLGYKTIATLAVIAVSSGYY). At 222 to 243 (NRFLSGLWRSRRLAFRPFNYSK) the chain is on the mitochondrial matrix side.

This sequence belongs to the cytochrome c family. Component of the ubiquinol-cytochrome c oxidoreductase (cytochrome b-c1 complex, complex III, CIII), a multisubunit enzyme composed of 3 respiratory subunits cytochrome b, cytochrome c1 and Rieske protein, 2 core protein subunits, and additional low-molecular weight protein subunits. The complex exists as an obligatory dimer and forms supercomplexes (SCs) in the inner mitochondrial membrane with cytochrome c oxidase (complex IV, CIV). Heme serves as cofactor.

Its subcellular location is the mitochondrion inner membrane. It catalyses the reaction a quinol + 2 Fe(III)-[cytochrome c](out) = a quinone + 2 Fe(II)-[cytochrome c](out) + 2 H(+)(out). Functionally, component of the ubiquinol-cytochrome c oxidoreductase, a multisubunit transmembrane complex that is part of the mitochondrial electron transport chain which drives oxidative phosphorylation. The respiratory chain contains 3 multisubunit complexes succinate dehydrogenase (complex II, CII), ubiquinol-cytochrome c oxidoreductase (cytochrome b-c1 complex, complex III, CIII) and cytochrome c oxidase (complex IV, CIV), that cooperate to transfer electrons derived from NADH and succinate to molecular oxygen, creating an electrochemical gradient over the inner membrane that drives transmembrane transport and the ATP synthase. The cytochrome b-c1 complex catalyzes electron transfer from ubiquinol to cytochrome c, linking this redox reaction to translocation of protons across the mitochondrial inner membrane, with protons being carried across the membrane as hydrogens on the quinol. In the process called Q cycle, 2 protons are consumed from the matrix, 4 protons are released into the intermembrane space and 2 electrons are passed to cytochrome c. Cytochrome c1 is a catalytic core subunit containing a c-type heme. It transfers electrons from the [2Fe-2S] iron-sulfur cluster of the Rieske protein to cytochrome c. This chain is Cytochrome c1, heme protein, found in Euglena gracilis.